The primary structure comprises 226 residues: Ribonuclease 3 (226 aa).

An RNase III domain is found at 7 to 129 (LPRLCRTLGY…IIGAIYLDSD (123 aa)). Residue Glu42 participates in Mg(2+) binding. The active site involves Asp46. Residues Asp115 and Glu118 each coordinate Mg(2+). Glu118 is a catalytic residue. The DRBM domain maps to 156 to 226 (DAKTLLQEYL…AAQVLELLKK (71 aa)).

Belongs to the ribonuclease III family. In terms of assembly, homodimer. Mg(2+) is required as a cofactor.

It localises to the cytoplasm. The catalysed reaction is Endonucleolytic cleavage to 5'-phosphomonoester.. Its function is as follows. Digests double-stranded RNA. Involved in the processing of primary rRNA transcript to yield the immediate precursors to the large and small rRNAs (23S and 16S). Processes some mRNAs, and tRNAs when they are encoded in the rRNA operon. Processes pre-crRNA and tracrRNA of type II CRISPR loci if present in the organism. The chain is Ribonuclease 3 from Shewanella sp. (strain W3-18-1).